The following is a 348-amino-acid chain: D-erythrose-4-phosphate dehydrogenase (348 aa).

Residues 12 to 13 and Arg81 contribute to the NAD(+) site; that span reads RI. Substrate contacts are provided by residues 154 to 156, Arg200, 213 to 214, and Arg236; these read SCT and TK. Cys155 (nucleophile) is an active-site residue. An NAD(+)-binding site is contributed by Asn318.

Belongs to the glyceraldehyde-3-phosphate dehydrogenase family. Epd subfamily. Homotetramer.

The protein resides in the cytoplasm. It catalyses the reaction D-erythrose 4-phosphate + NAD(+) + H2O = 4-phospho-D-erythronate + NADH + 2 H(+). It functions in the pathway cofactor biosynthesis; pyridoxine 5'-phosphate biosynthesis; pyridoxine 5'-phosphate from D-erythrose 4-phosphate: step 1/5. In terms of biological role, catalyzes the NAD-dependent conversion of D-erythrose 4-phosphate to 4-phosphoerythronate. The protein is D-erythrose-4-phosphate dehydrogenase of Salmonella dublin (strain CT_02021853).